The following is a 258-amino-acid chain: Acetylglutamate kinase (258 aa).

Residues 44–45, R66, and N158 each bind substrate; that span reads GG. ATP contacts are provided by residues 181 to 186 and 209 to 211; these read DVSGIL and IIT.

Belongs to the acetylglutamate kinase family. ArgB subfamily. As to quaternary structure, homodimer.

Its subcellular location is the cytoplasm. The enzyme catalyses N-acetyl-L-glutamate + ATP = N-acetyl-L-glutamyl 5-phosphate + ADP. The protein operates within amino-acid biosynthesis; L-arginine biosynthesis; N(2)-acetyl-L-ornithine from L-glutamate: step 2/4. Its function is as follows. Catalyzes the ATP-dependent phosphorylation of N-acetyl-L-glutamate. The polypeptide is Acetylglutamate kinase (Yersinia pestis bv. Antiqua (strain Antiqua)).